A 217-amino-acid chain; its full sequence is Probable GTP-binding protein EngB (217 aa).

Positions 27-201 constitute an EngB-type G domain; the sequence is TGIEVAFAGR…RDKLDTWFSE (175 aa). GTP-binding positions include 35 to 42, 62 to 66, 80 to 83, 147 to 150, and 180 to 182; these read GRSNAGKS, GRTQL, DLPG, TKAD, and FSS. Positions 42 and 64 each coordinate Mg(2+).

Belongs to the TRAFAC class TrmE-Era-EngA-EngB-Septin-like GTPase superfamily. EngB GTPase family. The cofactor is Mg(2+).

Necessary for normal cell division and for the maintenance of normal septation. This chain is Probable GTP-binding protein EngB, found in Edwardsiella ictaluri (strain 93-146).